A 276-amino-acid chain; its full sequence is Elongation factor Ts (276 aa).

An involved in Mg(2+) ion dislocation from EF-Tu region spans residues 79 to 82 (TDFV).

Belongs to the EF-Ts family.

Its subcellular location is the cytoplasm. In terms of biological role, associates with the EF-Tu.GDP complex and induces the exchange of GDP to GTP. It remains bound to the aminoacyl-tRNA.EF-Tu.GTP complex up to the GTP hydrolysis stage on the ribosome. The protein is Elongation factor Ts of Buchnera aphidicola subsp. Cinara cedri (strain Cc).